The chain runs to 86 residues: Cytochrome c oxidase subunit 6B1 (86 aa).

Ala2 is subject to N-acetylalanine. The region spanning 27-73 is the CHCH domain; it reads TRNCWQNYLDFHRCEKAMTAKGGDVSVCEWYRRVYKSLCPISWVSTW. The Cx9C motif motif lies at 30–40; that stretch reads CWQNYLDFHRC. 2 disulfides stabilise this stretch: Cys30–Cys65 and Cys40–Cys54. Positions 54–65 match the Cx10C motif motif; sequence CEWYRRVYKSLC. Lys62 is modified (N6-acetyllysine).

The protein belongs to the cytochrome c oxidase subunit 6B family. Component of the cytochrome c oxidase (complex IV, CIV), a multisubunit enzyme composed of 14 subunits. The complex is composed of a catalytic core of 3 subunits MT-CO1, MT-CO2 and MT-CO3, encoded in the mitochondrial DNA, and 11 supernumerary subunits COX4I1 (or COX4I2), COX5A, COX5B, COX6A2 (or COX6A1), COX6B1 (or COX6B2), COX6C, COX7A1 (or COX7A2), COX7B, COX7C, COX8B and NDUFA4, which are encoded in the nuclear genome. The complex exists as a monomer or a dimer and forms supercomplexes (SCs) in the inner mitochondrial membrane with NADH-ubiquinone oxidoreductase (complex I, CI) and ubiquinol-cytochrome c oxidoreductase (cytochrome b-c1 complex, complex III, CIII), resulting in different assemblies (supercomplex SCI(1)III(2)IV(1) and megacomplex MCI(2)III(2)IV(2)).

It localises to the mitochondrion inner membrane. It functions in the pathway energy metabolism; oxidative phosphorylation. Functionally, component of the cytochrome c oxidase, the last enzyme in the mitochondrial electron transport chain which drives oxidative phosphorylation. The respiratory chain contains 3 multisubunit complexes succinate dehydrogenase (complex II, CII), ubiquinol-cytochrome c oxidoreductase (cytochrome b-c1 complex, complex III, CIII) and cytochrome c oxidase (complex IV, CIV), that cooperate to transfer electrons derived from NADH and succinate to molecular oxygen, creating an electrochemical gradient over the inner membrane that drives transmembrane transport and the ATP synthase. Cytochrome c oxidase is the component of the respiratory chain that catalyzes the reduction of oxygen to water. Electrons originating from reduced cytochrome c in the intermembrane space (IMS) are transferred via the dinuclear copper A center (CU(A)) of subunit 2 and heme A of subunit 1 to the active site in subunit 1, a binuclear center (BNC) formed by heme A3 and copper B (CU(B)). The BNC reduces molecular oxygen to 2 water molecules using 4 electrons from cytochrome c in the IMS and 4 protons from the mitochondrial matrix. The chain is Cytochrome c oxidase subunit 6B1 (COX6B1) from Bos taurus (Bovine).